Here is a 158-residue protein sequence, read N- to C-terminus: uncharacterized protein (158 aa).

A signal peptide spans 1–19; the sequence is MQKLLLAVLFFSLLAIATA. A disordered region spans residues 82-158; that stretch reads ANPKAEAEPG…VYENDDENEE (77 aa). The segment covering 84–107 has biased composition (basic and acidic residues); it reads PKAEAEPGSLDKEAGTKGEKEKNG. The span at 141–158 shows a compositional bias: acidic residues; that stretch reads DDDDDHDDVYENDDENEE.

Prismatic layer of shell (at protein level). Expressed primarily in the mantle with highest level in the mantle edge and lower level in the mantle pallium.

It localises to the secreted. This is an uncharacterized protein from Pinctada maxima (Silver-lipped pearl oyster).